We begin with the raw amino-acid sequence, 392 residues long: ESX-1 secretion-associated protein EspA (392 aa).

Positions 302–392 are disordered; it reads TRQALRPRAD…GQKVLVRNVV (91 aa). The span at 334 to 344 shows a compositional bias: gly residues; the sequence is QGMGGPVGMGG.

As to quaternary structure, homodimer; disulfide-linked.

Its subcellular location is the secreted. Its function is as follows. Required for secretion of EsxA (ESAT-6) and EsxB (CFP-10) and for virulence. This is ESX-1 secretion-associated protein EspA from Mycobacterium tuberculosis (strain CDC 1551 / Oshkosh).